Reading from the N-terminus, the 1117-residue chain is Cytospin-A (1117 aa).

3 disordered regions span residues 1–176 (MKKA…NQIS), 293–323 (SLSPEITPGNQSDGGGTLTSSVEGSAPGSVE), and 358–390 (SSDDALDAPSSSESEGIPSIERSRKGSSGNASE). Composition is skewed to low complexity over residues 45–72 (TTASLSKTKSSDDLLAGMAGGVTVTNGV) and 99–119 (KISTGTSSSTKRSTSIGNKES). Basic and acidic residues-rich tracts occupy residues 120-131 (SSTRERLRERTR) and 158-171 (TTTECDVRMSKSKS). A coiled-coil region spans residues 168–280 (KSKSDNQISD…LNALGFSLEQ (113 aa)). Positions 293 to 303 (SLSPEITPGNQ) are enriched in polar residues. A compositionally biased stretch (low complexity) spans 358–377 (SSDDALDAPSSSESEGIPSI). Phosphoserine occurs at positions 384, 385, and 389. Coiled coils occupy residues 394–449 (ACLT…MESL) and 487–807 (RYME…RGRV). Positions 852–878 (SQVPNPTAAAIPRTPLSPSPMKTPPAA) are disordered. 3 positions are modified to phosphoserine: Ser-868, Ser-881, and Ser-887. The interval 920-997 (TSSTSRPASL…PTTRSRIREE (78 aa)) is disordered. The span at 946–956 (RSSEEMKRDIS) shows a compositional bias: basic and acidic residues. The segment covering 971–990 (TTSPQLSLSSSPTASVTPTT) has biased composition (low complexity). In terms of domain architecture, Calponin-homology (CH) spans 1011–1116 (GSKRNALLKW…YVTAIYKYFE (106 aa)).

Belongs to the cytospin-A family. As to quaternary structure, may interact with both microtubules and actin cytoskeleton.

It localises to the cytoplasm. It is found in the cytoskeleton. The protein localises to the spindle. Its subcellular location is the cell junction. The protein resides in the gap junction. Its function is as follows. Involved in cytokinesis and spindle organization. May play a role in actin cytoskeleton organization and microtubule stabilization and hence required for proper cell adhesion and migration. The sequence is that of Cytospin-A (SPECC1L) from Canis lupus familiaris (Dog).